The sequence spans 97 residues: Aspartyl/glutamyl-tRNA(Asn/Gln) amidotransferase subunit C (97 aa).

Belongs to the GatC family. As to quaternary structure, heterotrimer of A, B and C subunits.

The enzyme catalyses L-glutamyl-tRNA(Gln) + L-glutamine + ATP + H2O = L-glutaminyl-tRNA(Gln) + L-glutamate + ADP + phosphate + H(+). It carries out the reaction L-aspartyl-tRNA(Asn) + L-glutamine + ATP + H2O = L-asparaginyl-tRNA(Asn) + L-glutamate + ADP + phosphate + 2 H(+). Allows the formation of correctly charged Asn-tRNA(Asn) or Gln-tRNA(Gln) through the transamidation of misacylated Asp-tRNA(Asn) or Glu-tRNA(Gln) in organisms which lack either or both of asparaginyl-tRNA or glutaminyl-tRNA synthetases. The reaction takes place in the presence of glutamine and ATP through an activated phospho-Asp-tRNA(Asn) or phospho-Glu-tRNA(Gln). The polypeptide is Aspartyl/glutamyl-tRNA(Asn/Gln) amidotransferase subunit C (Prochlorococcus marinus (strain MIT 9303)).